The sequence spans 438 residues: UDP-N-acetylmuramoylalanine--D-glutamate ligase (438 aa).

105–111 is a binding site for ATP; that stretch reads GSNGKTT.

It belongs to the MurCDEF family.

Its subcellular location is the cytoplasm. It carries out the reaction UDP-N-acetyl-alpha-D-muramoyl-L-alanine + D-glutamate + ATP = UDP-N-acetyl-alpha-D-muramoyl-L-alanyl-D-glutamate + ADP + phosphate + H(+). Its pathway is cell wall biogenesis; peptidoglycan biosynthesis. Cell wall formation. Catalyzes the addition of glutamate to the nucleotide precursor UDP-N-acetylmuramoyl-L-alanine (UMA). This Oenococcus oeni (strain ATCC BAA-331 / PSU-1) protein is UDP-N-acetylmuramoylalanine--D-glutamate ligase.